The primary structure comprises 41 residues: Photosystem I reaction center subunit IX (41 aa).

A helical membrane pass occupies residues Tyr7–Ile27.

This sequence belongs to the PsaJ family.

The protein localises to the plastid. The protein resides in the chloroplast thylakoid membrane. Its function is as follows. May help in the organization of the PsaE and PsaF subunits. The protein is Photosystem I reaction center subunit IX of Stigeoclonium helveticum (Green alga).